Consider the following 102-residue polypeptide: Protein translation factor SUI1 homolog (102 aa).

It belongs to the SUI1 family.

This Methanococcus vannielii protein is Protein translation factor SUI1 homolog.